The sequence spans 226 residues: Ethylene-responsive transcription factor-like protein At4g13040 (226 aa).

Disordered regions lie at residues 63-109 (EERS…RKRV) and 195-226 (KKPK…SDKM). The span at 97 to 109 (PPKRRKQHRRKRV) shows a compositional bias: basic residues. The AP2/ERF DNA-binding region spans 105 to 171 (RRKRVHNQEP…REPNFELSEE (67 aa)). The segment covering 217 to 226 (EEEEQDSDKM) has biased composition (acidic residues).

It belongs to the AP2/ERF transcription factor family.

It localises to the nucleus. Its function is as follows. Probably acts as a transcriptional activator. Binds to the GCC-box pathogenesis-related promoter element. May be involved in the regulation of gene expression by stress factors and by components of stress signal transduction pathways. This is Ethylene-responsive transcription factor-like protein At4g13040 from Arabidopsis thaliana (Mouse-ear cress).